The sequence spans 427 residues: Mucorpepsin (427 aa).

Residues 1–22 form the signal peptide; the sequence is MLFSKISSAILLTAASFALTSA. Residues 23–66 constitute a propeptide, activation peptide; that stretch reads RPVSKQSDADDKLLALPLTSVNRKYSQTKHGQQAAEKLGGIKAF. One can recognise a Peptidase A1 domain in the interval 86-418; it reads YAIPVSIGTP…DFGKNRIGFA (333 aa). Residue aspartate 104 is part of the active site. Residues cysteine 117 and cysteine 123 are joined by a disulfide bond. A glycan (N-linked (GlcNAc...) asparagine) is linked at asparagine 254. The active site involves aspartate 303. Cysteine 338 and cysteine 382 are oxidised to a cystine.

Belongs to the peptidase A1 family.

The enzyme catalyses Hydrolysis of proteins, favoring hydrophobic residues at P1 and P1'. Clots milk. Does not accept Lys at P1, and hence does not activate trypsinogen.. Functionally, this enzyme, capable of clotting milk is frequently used for cheese production. The sequence is that of Mucorpepsin from Rhizomucor pusillus.